Consider the following 308-residue polypeptide: Ribosomal RNA large subunit methyltransferase F (308 aa).

The protein belongs to the methyltransferase superfamily. METTL16/RlmF family.

Its subcellular location is the cytoplasm. It catalyses the reaction adenosine(1618) in 23S rRNA + S-adenosyl-L-methionine = N(6)-methyladenosine(1618) in 23S rRNA + S-adenosyl-L-homocysteine + H(+). Functionally, specifically methylates the adenine in position 1618 of 23S rRNA. This is Ribosomal RNA large subunit methyltransferase F from Escherichia coli O157:H7.